A 654-amino-acid chain; its full sequence is Hepatocyte growth factor activator serine proteases (654 aa).

A signal peptide spans 1-33; sequence MGRWAWGPSLCPLPGMALLLLLLLLLVPHGAQP. The tract at residues 34–100 is disordered; it reads QAGGNLTEPP…SSSPGDPVLT (67 aa). A propeptide spans 34 to 370 (removed in mature form); the sequence is QAGGNLTEPP…RLAACESLAR (337 aa). N-linked (GlcNAc...) asparagine glycosylation is found at Asn38 and Asn46. The segment covering 57–81 has biased composition (low complexity); sequence PVTSVTPVTPATSAPEAQGPRGRGL. A Fibronectin type-II domain is found at 101-148; the sequence is VDGQPCRFPFRYGGRMLHACTSEGSAHRKWCATTHNYDRDRAWGYCVQ. Cystine bridges form between Cys106–Cys131, Cys120–Cys146, Cys162–Cys173, Cys167–Cys184, Cys186–Cys195, Cys200–Cys228, Cys226–Cys235, Cys243–Cys254, Cys248–Cys265, Cys267–Cys276, Cys284–Cys365, Cys305–Cys347, Cys336–Cys360, Cys393–Cys520, Cys431–Cys447, Cys439–Cys509, Cys534–Cys603, Cys566–Cys582, and Cys593–Cys621. Residues 158–196 enclose the EGF-like 1 domain; the sequence is ALDSCASSPCLNGGSCSHTQDPGSYHCTCPMAFTGRNCD. Positions 198-238 constitute a Fibronectin type-I domain; that stretch reads EKCFDETRYEHLEAGDRWARVSQGQVEQCECAGGQIRCEGT. Positions 239 to 277 constitute an EGF-like 2 domain; it reads RHTACLSSPCLNGGTCHLIVATGTTVCSCPPGHAGRLCN. One can recognise a Kringle domain in the interval 283–365; that stretch reads RCFVGNGTEY…SWEYCRLAAC (83 aa). Asn288 carries an N-linked (GlcNAc...) asparagine glycan. The Peptidase S1 domain occupies 407–645; it reads IIGGSSSLPG…YVDWIKDRIW (239 aa). Catalysis depends on His446, which acts as the Charge relay system. Asn467 and Asn491 each carry an N-linked (GlcNAc...) asparagine glycan. The Charge relay system role is filled by Asp496. The N-linked (GlcNAc...) asparagine glycan is linked to Asn545. Ser597 (charge relay system) is an active-site residue.

Belongs to the peptidase S1 family. In terms of assembly, heterodimer of a short chain and a long chain linked by a disulfide bond. In terms of processing, the active form of HGFAC presents in the serum is derived from the COOH-terminal region of the precursor by the cleavage of bonds between Arg-370 and Ile-371 and Arg-406 and Ile-407. Liver.

Its subcellular location is the secreted. Serine protease that hydrolyzes the inactive zymogen hepatocyte growth factor (HGFsc) to an activated disulfide-linked heterodimer, then initiating hepatocyte growth factor receptor signaling pathway. The protein is Hepatocyte growth factor activator serine proteases (HGFAC) of Canis lupus familiaris (Dog).